The primary structure comprises 431 residues: ABSCISIC ACID-INSENSITIVE 5-like protein 7 (431 aa).

Residues 1-29 (MGTHINFNNLGGGGHPGGEGSSNQMKPTG) are disordered. Over residues 10–20 (LGGGGHPGGEG) the composition is skewed to gly residues. S39 and S61 each carry phosphoserine. S110 carries the post-translational modification Phosphoserine; by CPK32. The tract at residues 133 to 153 (DGNMEGSSGGGGESNVPPGRQ) is disordered. Residue T155 is modified to Phosphothreonine. Positions 319 to 331 (SPGTSSAENNSLS) are enriched in polar residues. The disordered stretch occupies residues 319–338 (SPGTSSAENNSLSPVPYVLN). Residues 340–347 (GRRSNTGL) carry the Nuclear localization signal motif. Residues 351–414 (IERRQRRMIK…KNELKETSKR (64 aa)) enclose the bZIP domain. A basic motif region spans residues 353 to 372 (RRQRRMIKNRESAARSRARK). Residues 372–411 (KQAYTLELEAEIEKLKKTNQELQKKQAEMVEMQKNELKET) adopt a coiled-coil conformation. Positions 379–393 (LEAEIEKLKKTNQEL) are leucine-zipper.

Belongs to the bZIP family. ABI5 subfamily. DNA-binding heterodimer. Interacts with CPK32 and the AFP proteins AFP1, AFP2 and AFP3. Interacts with FREE1 (via C-terminus). Post-translationally, phosphorylated by CPK4 and CPK11 in vitro. Expressed in roots, leaves, flowers and immatures siliques.

It is found in the nucleus. Functionally, functions as a transcriptional activator in the ABA-inducible expression of LTI65/RD29B (AC Q04980). Binds specifically to the ABA-responsive element (ABRE) of the LTI65/RD29B (AC Q04980) gene promoter. Binds to the promoter of FREE1 and activates its transcription. This Arabidopsis thaliana (Mouse-ear cress) protein is ABSCISIC ACID-INSENSITIVE 5-like protein 7.